Here is a 174-residue protein sequence, read N- to C-terminus: Co-chaperone protein HscB homolog (174 aa).

Residues N2–L74 form the J domain.

Belongs to the HscB family. As to quaternary structure, interacts with HscA and stimulates its ATPase activity.

Its function is as follows. Co-chaperone involved in the maturation of iron-sulfur cluster-containing proteins. Seems to help targeting proteins to be folded toward HscA. In Shewanella sp. (strain MR-4), this protein is Co-chaperone protein HscB homolog.